The following is a 471-amino-acid chain: POU domain protein 2 (471 aa).

Acidic residues predominate over residues 1–18; it reads CGKSYEEEEEEEDDELEA. 2 disordered regions span residues 1 to 32 and 149 to 238; these read CGKSYEEEEEEEDDELEADVAQNLSSKRSARQ and DQQL…PKPL. The segment covering 165–180 has biased composition (low complexity); it reads STPLSKSPLRSPSLSP. A compositionally biased stretch (polar residues) spans 186 to 196; the sequence is EPQQAQRTPPN. Low complexity predominate over residues 197-230; it reads SLAAAGLGLSSAVLTPNTPSMQQQQQQTMTSTTN. The POU-specific domain maps to 257-331; it reads EETTDLEELE…LLQKWLEDAD (75 aa). A DNA-binding region (homeobox) is located at residues 362 to 421; it reads RRKKRTSIETTIRGALEQAFVLNCKPTSEEINQLSERLHMDKEVVRVWFCNRRQKEKRIN.

The protein belongs to the POU transcription factor family. Class-2 subfamily.

It localises to the nucleus. DNA-binding regulatory protein implicated in early development. Involved in neuronal cell fate decision. May act as an octamer-dependent activator of transcription. This is POU domain protein 2 (pdm2) from Drosophila virilis (Fruit fly).